Reading from the N-terminus, the 493-residue chain is 1-aminocyclopropane-1-carboxylate synthase 1 (493 aa).

Lys-279 carries the N6-(pyridoxal phosphate)lysine modification.

The protein belongs to the class-I pyridoxal-phosphate-dependent aminotransferase family. In terms of assembly, homodimer. Pyridoxal 5'-phosphate is required as a cofactor.

The catalysed reaction is S-adenosyl-L-methionine = 1-aminocyclopropane-1-carboxylate + S-methyl-5'-thioadenosine + H(+). It functions in the pathway alkene biosynthesis; ethylene biosynthesis via S-adenosyl-L-methionine; ethylene from S-adenosyl-L-methionine: step 1/2. Its function is as follows. Catalyzes the formation of 1-aminocyclopropane-1-carboxylate, a direct precursor of ethylene in higher plants. This is 1-aminocyclopropane-1-carboxylate synthase 1 (ACC1A) from Cucurbita pepo (Vegetable marrow).